Consider the following 492-residue polypeptide: Beclin 1-associated autophagy-related key regulator (492 aa).

The residue at position 29 (Ser29) is a Phosphoserine. Positions 70–180 (RDRERFIDKK…KLGDLVEKKT (111 aa)) form a coiled coil. Disordered regions lie at residues 213–232 (TSGRDPADVSSETDSAMTSS) and 411–473 (GVAG…AGGM). Over residues 222 to 232 (SSETDSAMTSS) the composition is skewed to polar residues. Ser416 bears the Phosphoserine mark. Over residues 424-433 (VSDEETDLGT) the composition is skewed to acidic residues. Thr429 bears the Phosphothreonine mark. Positions 447 to 473 (PSQPVEVSQSQSTQASPPIASSSAGGM) are enriched in low complexity.

This sequence belongs to the ATG14 family. In terms of assembly, forms homooligomers; homo-oligomerization is essential for the roles in membrane tethering and enhancement of SNARE-mediated fusion. Component of the PI3K (PI3KC3/PI3K-III/class III phosphatidylinositol 3-kinase) complex I (PI3KC3-C1) in which the core composed of the catalytic subunit PIK3C3, the regulatory subunit PIK3R4 and BECN1 is associated with ATG14. PI3KC3-C1 displays a V-shaped architecture with PIK3R4 serving as a bridge between PIK3C3 and the ATG14:BECN1 subcomplex. PI3KC3-C1 can associate with further regulatory subunits. Interacts with PIK3CB. Interacts (via coiled-coil domain) with BECN2 (via coiled-coil domain); this interaction is tighter than BECN2 self-association. Interacts with the STX17-SNAP29 binary t-SNARE complex. Interacts with NRBF2. Interacts with PIK3C3 and BECN1; this interaction is increased in the absence of TMEM39A. Interacts with STEEP1; the interaction is required for trafficking of STING1 from the endoplasmic reticulum. Interacts with ARMC3 (via ARM domains). Ubiquitinated via 'Lys-6', 'Lys-11' and 'Lys-63'-linked polyubiquitin chains on multiple lysines by MARCHF7, leading to ATG14 aggregation and loss of interaction with STX17.

It is found in the cytoplasm. Its subcellular location is the endoplasmic reticulum membrane. The protein localises to the preautophagosomal structure membrane. In terms of biological role, required for both basal and inducible autophagy. Determines the localization of the autophagy-specific PI3-kinase complex. Plays a role in autophagosome formation and MAP1LC3/LC3 conjugation to phosphatidylethanolamine. Promotes BECN1 translocation from the trans-Golgi network to autophagosomes. Enhances PIK3C3 activity in a BECN1-dependent manner. Essential for the autophagy-dependent phosphorylation of BECN1. Stimulates the phosphorylation of BECN1, but suppresses the phosphorylation PIK3C3 by AMPK. Binds to STX17-SNAP29 binary t-SNARE complex on autophagosomes and primes it for VAMP8 interaction to promote autophagosome-endolysosome fusion. Modulates the hepatic lipid metabolism. This is Beclin 1-associated autophagy-related key regulator from Rattus norvegicus (Rat).